The sequence spans 368 residues: Cystathionine beta-lyase (368 aa).

Residue lysine 221 is modified to N6-(pyridoxal phosphate)lysine.

It belongs to the class-II pyridoxal-phosphate-dependent aminotransferase family. MalY/PatB cystathionine beta-lyase subfamily. Pyridoxal 5'-phosphate serves as cofactor.

It carries out the reaction L,L-cystathionine + H2O = L-homocysteine + pyruvate + NH4(+). The enzyme catalyses an S-substituted L-cysteine + H2O = a thiol + pyruvate + NH4(+). It functions in the pathway amino-acid biosynthesis; L-methionine biosynthesis via de novo pathway; L-homocysteine from L-cystathionine: step 1/1. Functionally, catalyzes the transformation of cystathionine to homocysteine. This chain is Cystathionine beta-lyase (metC), found in Corynebacterium glutamicum (Brevibacterium saccharolyticum).